The following is a 289-amino-acid chain: F-actin-capping protein subunit beta (289 aa).

Residues 73–110 (RSPWSNQFDPPLEGGNQGGSGGDGEGDGGEGGAAGSIM) form a disordered region. Residues 87 to 106 (GNQGGSGGDGEGDGGEGGAA) are compositionally biased toward gly residues.

It belongs to the F-actin-capping protein beta subunit family. As to quaternary structure, component of the F-actin capping complex, composed of a heterodimer of an alpha and a beta subunit.

Its subcellular location is the cytoplasm. It is found in the cytoskeleton. The protein localises to the actin patch. F-actin-capping proteins bind in a Ca(2+)-independent manner to the fast growing ends of actin filaments (barbed end) thereby blocking the exchange of subunits at these ends. Unlike other capping proteins (such as gelsolin and severin), these proteins do not sever actin filaments. In Neurospora crassa (strain ATCC 24698 / 74-OR23-1A / CBS 708.71 / DSM 1257 / FGSC 987), this protein is F-actin-capping protein subunit beta (fac-2).